The following is a 126-amino-acid chain: 14 kDa phosphohistidine phosphatase (126 aa).

A substrate-binding site is contributed by lysine 22. The active-site Proton acceptor is the histidine 54. A substrate-binding site is contributed by 95-97 (SMG).

This sequence belongs to the janus family. As to quaternary structure, monomer.

Its subcellular location is the cytoplasm. The enzyme catalyses N(pros)-phospho-L-histidyl-[protein] + H2O = L-histidyl-[protein] + phosphate. The catalysed reaction is N(tele)-phospho-L-histidyl-[protein] + H2O = L-histidyl-[protein] + phosphate. In terms of biological role, exhibits phosphohistidine phosphatase activity. The polypeptide is 14 kDa phosphohistidine phosphatase (PHPT1) (Sus scrofa (Pig)).